A 158-amino-acid chain; its full sequence is Protein Smg homolog (158 aa).

This sequence belongs to the Smg family.

The polypeptide is Protein Smg homolog (Herminiimonas arsenicoxydans).